Reading from the N-terminus, the 209-residue chain is V-type ATP synthase subunit D (209 aa).

This sequence belongs to the V-ATPase D subunit family.

Its function is as follows. Produces ATP from ADP in the presence of a proton gradient across the membrane. This chain is V-type ATP synthase subunit D, found in Anaeromyxobacter dehalogenans (strain 2CP-C).